The following is a 376-amino-acid chain: Protein FAM199X (376 aa).

Basic and acidic residues predominate over residues 237 to 253 (YIKEHSPRQRSTRESWK). The segment at 237-350 (YIKEHSPRQR…QRQARKERLS (114 aa)) is disordered. Low complexity predominate over residues 255–300 (TSYSTASTSGVSGASVSSSSASMVSTASSTGSSGGNSASNSSANMS). Residues 318–337 (DSKKRSKQRKLQQKALRKRQ) are compositionally biased toward basic residues. Positions 320 to 349 (KKRSKQRKLQQKALRKRQLKEQRQARKERL) form a coiled coil. The span at 338-349 (LKEQRQARKERL) shows a compositional bias: basic and acidic residues.

This sequence belongs to the FAM199 family.

The sequence is that of Protein FAM199X (fam199x) from Xenopus tropicalis (Western clawed frog).